We begin with the raw amino-acid sequence, 58 residues long: MATVKVTLIKSMTGRIPNHKLCVKGLGLRRIGHTVEVQDTPENRGMINKAYYMLRVEG.

Belongs to the universal ribosomal protein uL30 family. In terms of assembly, part of the 50S ribosomal subunit.

The polypeptide is Large ribosomal subunit protein uL30 (Pseudomonas fluorescens (strain ATCC BAA-477 / NRRL B-23932 / Pf-5)).